A 278-amino-acid chain; its full sequence is Bifunctional protein FolD (278 aa).

NADP(+) contacts are provided by residues 164 to 166 and T228; that span reads GRS.

Belongs to the tetrahydrofolate dehydrogenase/cyclohydrolase family. In terms of assembly, homodimer.

The catalysed reaction is (6R)-5,10-methylene-5,6,7,8-tetrahydrofolate + NADP(+) = (6R)-5,10-methenyltetrahydrofolate + NADPH. The enzyme catalyses (6R)-5,10-methenyltetrahydrofolate + H2O = (6R)-10-formyltetrahydrofolate + H(+). It participates in one-carbon metabolism; tetrahydrofolate interconversion. In terms of biological role, catalyzes the oxidation of 5,10-methylenetetrahydrofolate to 5,10-methenyltetrahydrofolate and then the hydrolysis of 5,10-methenyltetrahydrofolate to 10-formyltetrahydrofolate. This is Bifunctional protein FolD from Mycoplasmopsis synoviae (strain 53) (Mycoplasma synoviae).